A 296-amino-acid polypeptide reads, in one-letter code: D-alanine--D-alanine ligase (296 aa).

Positions 103–293 constitute an ATP-grasp domain; that stretch reads KEILMHHRMP…FDSFVKRIIE (191 aa). 129–180 contacts ATP; it reads ISFPAAVKPSSGGSSIATFKVKSIQELKHAYEEASKYGEVMIEQWVTGKEIT. Mg(2+)-binding residues include Asp247, Glu260, and Asn262.

The protein belongs to the D-alanine--D-alanine ligase family. Requires Mg(2+) as cofactor. Mn(2+) is required as a cofactor.

It localises to the cytoplasm. The catalysed reaction is 2 D-alanine + ATP = D-alanyl-D-alanine + ADP + phosphate + H(+). Its pathway is cell wall biogenesis; peptidoglycan biosynthesis. Functionally, cell wall formation. The sequence is that of D-alanine--D-alanine ligase from Francisella tularensis subsp. holarctica (strain LVS).